We begin with the raw amino-acid sequence, 67 residues long: MRIHYLLFTLLFLFLVPVPGHGGIINTLQKYYCRVRGGRCAVLSCLPKEEQIGKCSTRGRKCCRRKK.

A signal peptide spans 1-22 (MRIHYLLFTLLFLFLVPVPGHG). Intrachain disulfides connect C33–C62, C40–C55, and C45–C63.

Belongs to the beta-defensin family.

The protein resides in the secreted. Exhibits antimicrobial activity against Gram-positive and Gram-negative bacteria. This is Beta-defensin 103A (DEFB103A) from Gorilla gorilla gorilla (Western lowland gorilla).